A 299-amino-acid polypeptide reads, in one-letter code: Oxygen-dependent coproporphyrinogen-III oxidase (299 aa).

Residue S92 participates in substrate binding. Residues H96 and H106 each coordinate a divalent metal cation. Residue H106 is the Proton donor of the active site. A substrate-binding site is contributed by 108-110; that stretch reads NVR. A divalent metal cation-binding residues include H145 and H175. The interval 240-275 is important for dimerization; the sequence is YVEFNLVWDRGTLFGLQTGGRTESILMSMPPLVRWE. Residue 258–260 coordinates substrate; it reads GGR.

It belongs to the aerobic coproporphyrinogen-III oxidase family. As to quaternary structure, homodimer. A divalent metal cation is required as a cofactor.

The protein resides in the cytoplasm. The enzyme catalyses coproporphyrinogen III + O2 + 2 H(+) = protoporphyrinogen IX + 2 CO2 + 2 H2O. The protein operates within porphyrin-containing compound metabolism; protoporphyrin-IX biosynthesis; protoporphyrinogen-IX from coproporphyrinogen-III (O2 route): step 1/1. In terms of biological role, involved in the heme biosynthesis. Catalyzes the aerobic oxidative decarboxylation of propionate groups of rings A and B of coproporphyrinogen-III to yield the vinyl groups in protoporphyrinogen-IX. In Klebsiella pneumoniae subsp. pneumoniae (strain ATCC 700721 / MGH 78578), this protein is Oxygen-dependent coproporphyrinogen-III oxidase.